The primary structure comprises 147 residues: Large ribosomal subunit protein uL15 (147 aa).

The tract at residues 1–62 (MKLHELKPAQ…GQQPLSRRMP (62 aa)) is disordered. 2 stretches are compositionally biased toward gly residues: residues 21 to 31 (RGIGSGTGKTS) and 42 to 52 (AGGGVRPGFEG).

The protein belongs to the universal ribosomal protein uL15 family. In terms of assembly, part of the 50S ribosomal subunit.

Functionally, binds to the 23S rRNA. The polypeptide is Large ribosomal subunit protein uL15 (Desulfitobacterium hafniense (strain DSM 10664 / DCB-2)).